Reading from the N-terminus, the 140-residue chain is Large ribosomal subunit protein uL16 (140 aa).

Positions 1-24 (MALAPARTKYRKSQKGSRAGNAKR) are disordered.

It belongs to the universal ribosomal protein uL16 family. In terms of assembly, part of the 50S ribosomal subunit.

Functionally, binds 23S rRNA and is also seen to make contacts with the A and possibly P site tRNAs. This Opitutus terrae (strain DSM 11246 / JCM 15787 / PB90-1) protein is Large ribosomal subunit protein uL16.